The following is an 849-amino-acid chain: Period circadian protein (849 aa).

Positions 1 to 13 (MNNMDGSENNAKV) are enriched in polar residues. The tract at residues 1 to 79 (MNNMDGSENN…LKKKKQVETL (79 aa)) is disordered. 2 stretches are compositionally biased toward low complexity: residues 14–27 (SDSA…NSQS) and 35–58 (STHS…SSSS). The Nuclear localization signal motif lies at 63–74 (DQKKEKELKKKK). PAS domains follow at residues 166–296 (NGFS…QAVP) and 314–416 (FVIR…YIIE). Residues 680–746 (NNTPSVYEKP…VSTSSQWSSS (67 aa)) form a disordered region. Positions 706-720 (NKHHCPSSRQFRRKQ) are enriched in basic residues. A compositionally biased stretch (low complexity) spans 735-746 (NPVSTSSQWSSS).

Forms a heterodimer with timeless (TIM); the complex then translocates into the nucleus. Post-translationally, phosphorylated with a circadian rhythmicity.

It localises to the nucleus. Involved in the generation of biological rhythms. The biological cycle depends on the rhythmic formation and nuclear localization of the tim-per complex. Light induces the degradation of tim, which promotes elimination of per. Nuclear activity of the heterodimer coordinatively regulates per and tim transcription negative feedback loop. Behaves as a negative element in circadian transcriptional loop. Does not appear to bind DNA, suggesting indirect transcriptional inhibition. Expression exhibits prominent circadian variation in adult heads and in particular in the photoreceptor nuclei. The protein is Period circadian protein (per) of Antheraea pernyi (Chinese oak silk moth).